Reading from the N-terminus, the 833-residue chain is DNA gyrase subunit A (833 aa).

A Topo IIA-type catalytic domain is found at 34 to 500; that stretch reads LPDVRDGLKP…AGDVRDIEDI (467 aa). Tyr-122 (O-(5'-phospho-DNA)-tyrosine intermediate) is an active-site residue. A GyrA-box motif is present at residues 527-533; it reads QKRGGQG.

The protein belongs to the type II topoisomerase GyrA/ParC subunit family. In terms of assembly, heterotetramer, composed of two GyrA and two GyrB chains. In the heterotetramer, GyrA contains the active site tyrosine that forms a transient covalent intermediate with DNA, while GyrB binds cofactors and catalyzes ATP hydrolysis.

It is found in the cytoplasm. It carries out the reaction ATP-dependent breakage, passage and rejoining of double-stranded DNA.. In terms of biological role, a type II topoisomerase that negatively supercoils closed circular double-stranded (ds) DNA in an ATP-dependent manner to modulate DNA topology and maintain chromosomes in an underwound state. Negative supercoiling favors strand separation, and DNA replication, transcription, recombination and repair, all of which involve strand separation. Also able to catalyze the interconversion of other topological isomers of dsDNA rings, including catenanes and knotted rings. Type II topoisomerases break and join 2 DNA strands simultaneously in an ATP-dependent manner. The polypeptide is DNA gyrase subunit A (Chlamydia muridarum (strain MoPn / Nigg)).